Reading from the N-terminus, the 67-residue chain is Beta-defensin 9 (67 aa).

Positions 1-24 are cleaved as a signal peptide; the sequence is MRTLCSLLLICCLLFSYTTPAANS. Cystine bridges form between C34/C62, C41/C55, and C45/C63.

The protein belongs to the beta-defensin family. As to expression, weakly expressed in adult and neonatal brain.

It localises to the secreted. Its function is as follows. Has antibacterial activity. The chain is Beta-defensin 9 (Defb9) from Mus musculus (Mouse).